The chain runs to 94 residues: Cystatin-A1 (94 aa).

The Secondary area of contact signature appears at 45 to 49; sequence QLVAG.

The protein belongs to the cystatin family.

It is found in the cytoplasm. Functionally, intracellular thiol proteinase inhibitor. Inhibits papain, but not cathepsin B. This is Cystatin-A1 (cpiA) from Dictyostelium discoideum (Social amoeba).